We begin with the raw amino-acid sequence, 249 residues long: Probable transcriptional regulatory protein OTT_1378 (249 aa).

Belongs to the TACO1 family.

It is found in the cytoplasm. This Orientia tsutsugamushi (strain Ikeda) (Rickettsia tsutsugamushi) protein is Probable transcriptional regulatory protein OTT_1378.